The following is a 272-amino-acid chain: Putative protein-disulfide oxidoreductase RP025 (272 aa).

Residues 1-21 form the signal peptide; that stretch reads MRNIFIVLIFLFLSNCSEVKA. Residues 74–263 enclose the Thioredoxin domain; sequence DSREQKKPEI…ISKAVDKALD (190 aa). The cysteines at positions 116 and 119 are disulfide-linked.

This sequence belongs to the thioredoxin family. DsbA subfamily.

The protein localises to the periplasm. Its function is as follows. May be required for disulfide bond formation in some proteins. This Rickettsia prowazekii (strain Madrid E) protein is Putative protein-disulfide oxidoreductase RP025.